The following is a 165-amino-acid chain: Large ribosomal subunit protein eL15 (165 aa).

The segment at 126–147 is disordered; it reads TSAGRKSRGLGKGHKFHHTIGG. Basic residues predominate over residues 130–143; sequence RKSRGLGKGHKFHH.

Belongs to the eukaryotic ribosomal protein eL15 family. As to quaternary structure, component of the large ribosomal subunit.

It localises to the cytoplasm. Functionally, component of the large ribosomal subunit. The ribosome is a large ribonucleoprotein complex responsible for the synthesis of proteins in the cell. In Gallus gallus (Chicken), this protein is Large ribosomal subunit protein eL15 (RPL15).